Here is a 107-residue protein sequence, read N- to C-terminus: Iron-binding protein IscA (107 aa).

The Fe cation site is built by cysteine 35, cysteine 99, and cysteine 101.

This sequence belongs to the HesB/IscA family. As to quaternary structure, homodimer; may form tetramers and higher multimers. It depends on Fe cation as a cofactor.

Is able to transfer iron-sulfur clusters to apo-ferredoxin. Multiple cycles of [2Fe2S] cluster formation and transfer are observed, suggesting that IscA acts catalytically. Recruits intracellular free iron so as to provide iron for the assembly of transient iron-sulfur cluster in IscU in the presence of IscS, L-cysteine and the thioredoxin reductase system TrxA/TrxB. The chain is Iron-binding protein IscA from Pectobacterium carotovorum subsp. carotovorum (strain PC1).